The sequence spans 86 residues: uncharacterized protein (86 aa).

This is an uncharacterized protein from Beak and feather disease virus (BFDV).